Reading from the N-terminus, the 146-residue chain is MKLHELKPAKGSRKVRNRVGRGTSSGNGKTSGRGQKGQKARSGGGVRLGFEGGQTPLFRRIPKRGFTNINTKEYALVNLDQLNAFEDGTEVTPVVLKEAGIVRAEKSGVKILGNGELTKKLTVKAAKFSKSAEAAITAKGGSIEVI.

The disordered stretch occupies residues 1-51; that stretch reads MKLHELKPAKGSRKVRNRVGRGTSSGNGKTSGRGQKGQKARSGGGVRLGFE. A compositionally biased stretch (basic residues) spans 10 to 19; the sequence is KGSRKVRNRV. Gly residues-rich tracts occupy residues 23–35 and 42–51; these read TSSGNGKTSGRGQ and SGGGVRLGFE.

The protein belongs to the universal ribosomal protein uL15 family. In terms of assembly, part of the 50S ribosomal subunit.

Functionally, binds to the 23S rRNA. This is Large ribosomal subunit protein uL15 from Streptococcus equi subsp. equi (strain 4047).